The sequence spans 409 residues: 3-dehydro-bile acid delta(4,6)-reductase (409 aa).

FAD contacts are provided by Ser-12, Glu-33, Val-131, Glu-378, Asn-390, and Leu-391.

Belongs to the BaiN/RdsA family. BaiN subfamily. Requires FAD as cofactor.

The enzyme catalyses 3-oxocholan-24-oyl-CoA + NAD(+) = 3-oxochol-4-en-24-oyl-CoA + NADH + H(+). It carries out the reaction 3-oxochol-4-en-24-oyl-CoA + NAD(+) = 3-oxochol-4,6-dien-24-oyl-CoA + NADH + H(+). The catalysed reaction is 12alpha-hydroxy-3-oxocholan-24-oyl-CoA + NAD(+) = 12alpha-hydroxy-3-oxochol-4-en-24-oyl-CoA + NADH + H(+). It catalyses the reaction 12alpha-hydroxy-3-oxochol-4-en-24-oyl-CoA + NAD(+) = 12alpha-hydroxy-3-oxochola-4,6-dien-24-oyl-CoA + NADH + H(+). Its pathway is lipid metabolism; bile acid degradation. Involved in the secondary bile acid metabolism. Catalyzes two subsequent reductions of the double bonds within the bile acid A/B rings of 3-oxochol-4,6-dien-24-oyl-CoA and 12alpha-hydroxy-3-oxochol-4,6-dien-24-oyl-CoA to yield 3-oxocholan-24-oyl-CoA and 12alpha-hydroxy-3-oxocholan-24-oyl-CoA, respectively. The sequence is that of 3-dehydro-bile acid delta(4,6)-reductase from Clostridium scindens (strain ATCC 35704 / DSM 5676 / VPI 13733 / 19).